Here is a 39-residue protein sequence, read N- to C-terminus: Cytochrome b559 subunit beta (39 aa).

Residues 14–30 (WLAVHGLAVPTVSFLGS) form a helical membrane-spanning segment. H18 provides a ligand contact to heme.

Belongs to the PsbE/PsbF family. In terms of assembly, heterodimer of an alpha subunit and a beta subunit. PSII is composed of 1 copy each of membrane proteins PsbA, PsbB, PsbC, PsbD, PsbE, PsbF, PsbH, PsbI, PsbJ, PsbK, PsbL, PsbM, PsbT, PsbX, PsbY, PsbZ, Psb30/Ycf12, at least 3 peripheral proteins of the oxygen-evolving complex and a large number of cofactors. It forms dimeric complexes. Requires heme b as cofactor.

It localises to the plastid. It is found in the chloroplast thylakoid membrane. In terms of biological role, this b-type cytochrome is tightly associated with the reaction center of photosystem II (PSII). PSII is a light-driven water:plastoquinone oxidoreductase that uses light energy to abstract electrons from H(2)O, generating O(2) and a proton gradient subsequently used for ATP formation. It consists of a core antenna complex that captures photons, and an electron transfer chain that converts photonic excitation into a charge separation. This is Cytochrome b559 subunit beta from Muilla maritima (Sea muilla).